A 425-amino-acid chain; its full sequence is Serine--tRNA ligase (425 aa).

Residues 108–134 are disordered; it reads YPNLPSEACPDGRSEDDNKEVRRWGDP. The segment covering 117–134 has biased composition (basic and acidic residues); the sequence is PDGRSEDDNKEVRRWGDP. Residue 233 to 235 participates in L-serine binding; sequence TAE. Residue 264-266 participates in ATP binding; that stretch reads RRE. E287 provides a ligand contact to L-serine. An ATP-binding site is contributed by 351 to 354; sequence EISS. S385 provides a ligand contact to L-serine.

The protein belongs to the class-II aminoacyl-tRNA synthetase family. Type-1 seryl-tRNA synthetase subfamily. As to quaternary structure, homodimer. The tRNA molecule binds across the dimer.

It localises to the cytoplasm. It catalyses the reaction tRNA(Ser) + L-serine + ATP = L-seryl-tRNA(Ser) + AMP + diphosphate + H(+). The catalysed reaction is tRNA(Sec) + L-serine + ATP = L-seryl-tRNA(Sec) + AMP + diphosphate + H(+). Its pathway is aminoacyl-tRNA biosynthesis; selenocysteinyl-tRNA(Sec) biosynthesis; L-seryl-tRNA(Sec) from L-serine and tRNA(Sec): step 1/1. Catalyzes the attachment of serine to tRNA(Ser). Is also able to aminoacylate tRNA(Sec) with serine, to form the misacylated tRNA L-seryl-tRNA(Sec), which will be further converted into selenocysteinyl-tRNA(Sec). The protein is Serine--tRNA ligase of Synechococcus sp. (strain CC9311).